A 517-amino-acid polypeptide reads, in one-letter code: Endoglucanase A (517 aa).

A signal peptide spans M1–S25. E185 acts as the Proton donor in catalysis. The active-site Nucleophile is the E309. The segment covering H382–S392 has biased composition (basic and acidic residues). The interval H382–K424 is disordered. A compositionally biased stretch (polar residues) spans T393–S407. Residues G408–T420 are compositionally biased toward low complexity. A CBM2 domain is found at T416–D517.

This sequence belongs to the glycosyl hydrolase 5 (cellulase A) family.

It catalyses the reaction Endohydrolysis of (1-&gt;4)-beta-D-glucosidic linkages in cellulose, lichenin and cereal beta-D-glucans.. In terms of biological role, hydrolyzes barley beta-glucan, lichenan, carboxymethylcellulose and xylan. It shows preferential activity against the larger cellooligosaccharides (cellohexaose and cellopentaose); cellotetraose is the smallest substrate degraded completely. The protein is Endoglucanase A (celA) of Clostridium longisporum.